The chain runs to 448 residues: Trigger factor (448 aa).

Positions 163-248 (GDIVVIDFDG…VKDIRVPKAA (86 aa)) constitute a PPIase FKBP-type domain.

Belongs to the FKBP-type PPIase family. Tig subfamily.

The protein resides in the cytoplasm. The enzyme catalyses [protein]-peptidylproline (omega=180) = [protein]-peptidylproline (omega=0). Functionally, involved in protein export. Acts as a chaperone by maintaining the newly synthesized protein in an open conformation. Functions as a peptidyl-prolyl cis-trans isomerase. This is Trigger factor from Rhodospirillum centenum (strain ATCC 51521 / SW).